The following is a 340-amino-acid chain: MILPDRKQILDRELIRRIADTTISGSGHSDGLSEYASIRKAAFAFVESAVLGDQAYSPIENAELAFIVWILAALDENIITARTIIKARDTVEKQLRLVEHYEDLEEFGSRLGIEISVFGEQIGKDHLYRIGVADFATYASRVTGSKYRLSNQIVREGYVYVDEDVMAKVLREAFVSFMFDTLDQIRKEDAIETIKSVLDDLEKIRESYRKAHNVRMIAGKGDASMFPPCMKEIIKNLESGVNVSHMGRLALASFLHKAGYSEDEIVPYFRNAPDFDENITRYQIKHISGEISGTEYTPPKCETMRSNHLCYMDDDPLCHREWMKHPLTYYEVKRRNRKIR.

Cys-229, Cys-301, Cys-310, and Cys-318 together coordinate [4Fe-4S] cluster.

It belongs to the eukaryotic-type primase large subunit family. As to quaternary structure, heterodimer of a small subunit (PriS) and a large subunit (PriL). [4Fe-4S] cluster is required as a cofactor.

Functionally, regulatory subunit of DNA primase, an RNA polymerase that catalyzes the synthesis of short RNA molecules used as primers for DNA polymerase during DNA replication. Stabilizes and modulates the activity of the small subunit, increasing the rate of DNA synthesis, and conferring RNA synthesis capability. The DNA polymerase activity may enable DNA primase to also catalyze primer extension after primer synthesis. May also play a role in DNA repair. The polypeptide is DNA primase large subunit PriL (Thermoplasma acidophilum (strain ATCC 25905 / DSM 1728 / JCM 9062 / NBRC 15155 / AMRC-C165)).